A 111-amino-acid chain; its full sequence is Cornifelin homolog A (111 aa).

The protein belongs to the cornifelin family.

The sequence is that of Cornifelin homolog A (cnfn-a) from Xenopus laevis (African clawed frog).